The primary structure comprises 84 residues: Anaphase-promoting complex subunit 11 (84 aa).

The Zn(2+) site is built by C23, C26, C34, C37, C44, C51, H53, H56, H58, C59, C73, and C76. An RING-type zinc finger spans residues 34 to 77 (CPDCKVPGDDCPLVWGQCSHCFHMHCILKWLNAQQVQQHCPMCR).

This sequence belongs to the RING-box family. The mammalian APC/C is composed at least of 14 distinct subunits ANAPC1, ANAPC2, CDC27/APC3, ANAPC4, ANAPC5, CDC16/APC6, ANAPC7, CDC23/APC8, ANAPC10, ANAPC11, CDC26/APC12, ANAPC13, ANAPC15 and ANAPC16 that assemble into a complex of at least 19 chains with a combined molecular mass of around 1.2 MDa; APC/C interacts with FZR1 and FBXO5. Interacts with the cullin domain of ANAPC2. Interacts with UBE2D2. Post-translationally, auto-ubiquitinated.

It is found in the cytoplasm. Its subcellular location is the nucleus. It functions in the pathway protein modification; protein ubiquitination. Its function is as follows. Together with the cullin protein ANAPC2, constitutes the catalytic component of the anaphase promoting complex/cyclosome (APC/C), a cell cycle-regulated E3 ubiquitin ligase that controls progression through mitosis and the G1 phase of the cell cycle. The APC/C complex acts by mediating ubiquitination and subsequent degradation of target proteins: it mainly mediates the formation of 'Lys-11'-linked polyubiquitin chains and, to a lower extent, the formation of 'Lys-48'- and 'Lys-63'-linked polyubiquitin chains. The APC/C complex catalyzes assembly of branched 'Lys-11'-/'Lys-48'-linked branched ubiquitin chains on target proteins. May recruit the E2 ubiquitin-conjugating enzymes to the complex. The protein is Anaphase-promoting complex subunit 11 (Anapc11) of Mus musculus (Mouse).